We begin with the raw amino-acid sequence, 119 residues long: Large ribosomal subunit protein uL18 (119 aa).

It belongs to the universal ribosomal protein uL18 family. As to quaternary structure, part of the 50S ribosomal subunit; part of the 5S rRNA/L5/L18/L25 subcomplex. Contacts the 5S and 23S rRNAs.

Its function is as follows. This is one of the proteins that bind and probably mediate the attachment of the 5S RNA into the large ribosomal subunit, where it forms part of the central protuberance. This chain is Large ribosomal subunit protein uL18, found in Xanthomonas oryzae pv. oryzae (strain PXO99A).